The primary structure comprises 121 residues: Small ribosomal subunit protein uS13 (121 aa).

Residues G94 to K121 are disordered.

Belongs to the universal ribosomal protein uS13 family. In terms of assembly, part of the 30S ribosomal subunit. Forms a loose heterodimer with protein S19. Forms two bridges to the 50S subunit in the 70S ribosome.

Its function is as follows. Located at the top of the head of the 30S subunit, it contacts several helices of the 16S rRNA. In the 70S ribosome it contacts the 23S rRNA (bridge B1a) and protein L5 of the 50S subunit (bridge B1b), connecting the 2 subunits; these bridges are implicated in subunit movement. Contacts the tRNAs in the A and P-sites. The sequence is that of Small ribosomal subunit protein uS13 from Verminephrobacter eiseniae (strain EF01-2).